A 329-amino-acid chain; its full sequence is Malate dehydrogenase (329 aa).

12-18 (GAAGQIG) lines the NAD(+) pocket. The substrate site is built by arginine 95 and arginine 101. NAD(+) is bound by residues asparagine 108, glutamine 115, and 132 to 134 (VGN). Substrate contacts are provided by asparagine 134 and arginine 165. Residue histidine 190 is the Proton acceptor of the active site.

This sequence belongs to the LDH/MDH superfamily. MDH type 2 family.

The enzyme catalyses (S)-malate + NAD(+) = oxaloacetate + NADH + H(+). In terms of biological role, catalyzes the reversible oxidation of malate to oxaloacetate. The sequence is that of Malate dehydrogenase from Janthinobacterium sp. (strain Marseille) (Minibacterium massiliensis).